The primary structure comprises 338 residues: MGSLAKKVLLTGGTGFIASHILTELLDAGYQVVVTVRTHDKGRQLLESLSNTGDKAASYVVVEDIAKDGAYDEAIQSISDLDLVVHTASPYHFNYTDPKTDFLDPAIKGTAGLLASIKAYAPTVKRVVLTSSSATIVTPPNHPEVYDETSYGSVTWEEAMVPQVTYRASKIFAERAAFDFIENDKPNFDLVTINPPLVFGPKPRHVTDLKALNTSNHIIRDTMLGKWKDGGAPIAIPFTWVDVRDVAFAHRQALELPEVSGQRFFTVAGHFSNKRIAEAIRATHPELADRLPPSDVPDDLPEGIYGFDNSKSRKVLGMTFRDLNTCVGDAVTSMLEQA.

2 residues coordinate NADP(+): lysine 41 and tyrosine 166.

This sequence belongs to the NAD(P)-dependent epimerase/dehydratase family. Dihydroflavonol-4-reductase subfamily.

Its pathway is secondary metabolite biosynthesis. Ketoreductase; part of the gene cluster that mediates the biosynthesis of azaphilones, a class of fungal metabolites characterized by a highly oxygenated pyrano-quinone bicyclic core and exhibiting a broad range of bioactivities. In the first step, the non-reducing polyketide synthase azaA forms the hexaketide precursor from successive condensations of five malonyl-CoA units, presumably with a simple acetyl-CoA starter unit. The reactive polyketide chain then undergoes a PT-mediated C2-C7 cyclization to afford the aromatic ring and is eventually released as an aldehyde through the R-domain. The putative ketoreductase azaE is proposed to catalyze the reduction of the terminal ketone resulting in the early culture product FK17-P2a. The monooxygenase azaH was demonstrated to be the only enzyme required to convert FK17-P2a to azanigerone E. AzaH first hydroxylates the benzaldehyde intermediate FK17-P2a at C4, which triggers the formation of the pyran-ring to afford azanigerone E. In parallel, the 2,4-dimethylhexanoyl chain is synthesized by the HR-PKS azaB and is proposed to be transferred to the C4-hydroxyl of azanigerone E by the acyltransferase azaD directly from the ACP domain of azaB. Alternatively, the 2,4-dimethyl-hexanoyl chain may be offloaded from the HR-PKS as a carboxylic acid and converted to an acyl-CoA by azaF. The resulting acyl-CoA molecule could then be taken up as a substrate by AzaD to form azanigerone B. To yield the carboxylic acid substituent in azanigerone A, the hydroxypropyl side chain of azanigerone B would need to undergo a C-C oxidative cleavage catalyzed by cytochrome P450 AzaI. AzaI is proposed to act on a vicinal diol that leads to a C-C bond scission either through an alkoxyradical intermediate or a peroxy complex. In the biosynthesis of azanigerone A, azanigerone B first undergoes hydroxylation at C10, possibly catalyzed by one of the two FAD-dependent monooxygenases encoded in the cluster, azaG or azaL, resulting in the vicinal diol azanigerone C. Oxidative cleavage of azanigerone C by azaI would yield the corresponding aldehyde derivative of azanigerone A. Finally, the dehydrogenase azaJ is proposed to convert the aldehyde functional group into the carboxylic acid, completing the conversion from azanigerone B to azanigerone A. Alternatively, the oxidation of aldehyde to carboxylic acid may be catalyzed by the same P450 enzyme azaI via consecutive oxidation or by endogenous alcohol dehydrogenase. In Aspergillus niger (strain ATCC 1015 / CBS 113.46 / FGSC A1144 / LSHB Ac4 / NCTC 3858a / NRRL 328 / USDA 3528.7), this protein is Ketoreductase azaE.